The following is a 172-amino-acid chain: Counting factor-associated protein B (172 aa).

The signal sequence occupies residues Met-1–Thr-21. Asn-37 and Asn-153 each carry an N-linked (GlcNAc...) asparagine glycan.

The protein resides in the secreted. The polypeptide is Counting factor-associated protein B (cfaB) (Dictyostelium discoideum (Social amoeba)).